Reading from the N-terminus, the 141-residue chain is Nucleoside diphosphate kinase (141 aa).

Residues K11, F59, R87, T93, R104, and N114 each contribute to the ATP site. Catalysis depends on H117, which acts as the Pros-phosphohistidine intermediate.

The protein belongs to the NDK family. Homotetramer. Requires Mg(2+) as cofactor.

The protein localises to the cytoplasm. The catalysed reaction is a 2'-deoxyribonucleoside 5'-diphosphate + ATP = a 2'-deoxyribonucleoside 5'-triphosphate + ADP. The enzyme catalyses a ribonucleoside 5'-diphosphate + ATP = a ribonucleoside 5'-triphosphate + ADP. Functionally, major role in the synthesis of nucleoside triphosphates other than ATP. The ATP gamma phosphate is transferred to the NDP beta phosphate via a ping-pong mechanism, using a phosphorylated active-site intermediate. This Neisseria gonorrhoeae (strain NCCP11945) protein is Nucleoside diphosphate kinase.